The chain runs to 189 residues: DAN domain family member 5 (189 aa).

The N-terminal stretch at Met-1 to Gly-22 is a signal peptide. N-linked (GlcNAc...) asparagine glycosylation occurs at Asn-38. 4 disulfides stabilise this stretch: Cys-101–Cys-148, Cys-115–Cys-162, Cys-125–Cys-183, and Cys-129–Cys-185. Positions Cys-101–Ser-186 constitute a CTCK domain.

This sequence belongs to the DAN family. As to expression, expressed in the retina, in inner segments of photoreceptors, at or close to the outer plexiform layer and in the ganglion cell layer (at protein level).

The protein resides in the secreted. In terms of biological role, antagonist of the extracellular signaling protein NODAL, which is required for correct left-right patterning during embryonic development. Antagonist of BMP and TGF-beta signaling. Independently of its role in left-right axis establishment, plays a role during heart development, possibly through the regulation of TGF-beta/Nodal signaling pathway. Displays anti-angiogenic activity by inhibiting endothelial sprouting, migration, and proliferation. Once internalized by endothelial cells, may alter their redox and glycolytic balance. The protein is DAN domain family member 5 (DAND5) of Homo sapiens (Human).